The following is a 266-amino-acid chain: Luciferase (266 aa).

The helical transmembrane segment at 22–41 (GLATACCAVAVASAIAFPYI) threads the bilayer.

It belongs to the fungal luciferase family.

The protein resides in the membrane. It carries out the reaction 3-hydroxyhispidin + O2 = (E)-caffeoylpyruvate + hnu + CO2. It catalyses the reaction 3-hydroxyhispidin + O2 = 4-[(E)-2-(3,4-dihydroxyphenyl)ethenyl]-1,7-dihydroxy-2,3,5-trioxabicyclo[2.2.2]oct-7-en-6-one. Its function is as follows. Luciferase; part of the gene cluster that mediates the fungal bioluminescence cycle. Uses the fungal luciferin 3-hydroxyhispidin as a substrate to produce an endoperoxide as a high-energy intermediate with decomposition that yields oxyluciferin (also known as caffeoylpyruvate) and light emission. The fungal bioluminescence cycle begins with the hispidin synthetase that catalyzes the formation of hispidin which is further hydroxylated by the hispidin-3-hydroxylase, yielding the fungal luciferin 3-hydroxyhispidin. The luciferase then produces an endoperoxide as a high-energy intermediate with decomposition that yields oxyluciferin and light emission. Oxyluciferin can be recycled to caffeic acid by caffeoylpyruvate hydrolase. This chain is Luciferase, found in Armillaria ostoyae (Armillaria root rot fungus).